A 507-amino-acid chain; its full sequence is Ribose import ATP-binding protein RbsA (507 aa).

2 ABC transporter domains span residues 7 to 242 (LEMR…VGRP) and 253 to 497 (IPLG…TGVT). ATP is bound at residue 39–46 (GENGAGKS).

It belongs to the ABC transporter superfamily. Ribose importer (TC 3.A.1.2.1) family. As to quaternary structure, the complex is composed of an ATP-binding protein (RbsA), two transmembrane proteins (RbsC) and a solute-binding protein (RbsB).

Its subcellular location is the cell inner membrane. It catalyses the reaction D-ribose(out) + ATP + H2O = D-ribose(in) + ADP + phosphate + H(+). Functionally, part of the ABC transporter complex RbsABC involved in ribose import. Responsible for energy coupling to the transport system. The polypeptide is Ribose import ATP-binding protein RbsA (Yersinia pestis bv. Antiqua (strain Antiqua)).